The sequence spans 226 residues: Reticulon-like protein B16 (226 aa).

The Reticulon domain occupies 41-224; that stretch reads AADLLLWRRR…RLSWSLSKDK (184 aa). Helical transmembrane passes span 54–74, 75–95, and 149–169; these read LGVI…GLPF, LSVS…HARV, and VVIC…CTLL.

Its subcellular location is the endoplasmic reticulum membrane. The protein is Reticulon-like protein B16 (RTNLB16) of Arabidopsis thaliana (Mouse-ear cress).